Consider the following 329-residue polypeptide: G-protein coupled bile acid receptor 1 (329 aa).

Topologically, residues Met-1–Glu-18 are extracellular. Asn-5 carries N-linked (GlcNAc...) asparagine glycosylation. A helical transmembrane segment spans residues Leu-19–Val-39. The Cytoplasmic segment spans residues Leu-40–Ala-49. A helical membrane pass occupies residues Gly-50 to Leu-70. The Extracellular portion of the chain corresponds to Pro-71–Cys-84. The N-linked (GlcNAc...) asparagine glycan is linked to Asn-75. Cys-84 and Cys-154 are joined by a disulfide. Residues Leu-85–Val-105 traverse the membrane as a helical segment. Residues His-106–Arg-124 lie on the Cytoplasmic side of the membrane. Residues Leu-125 to Trp-145 form a helical membrane-spanning segment. The Extracellular segment spans residues Asn-146–Gln-157. Asn-153 carries an N-linked (GlcNAc...) asparagine glycan. A helical membrane pass occupies residues Ala-158–Gly-178. Over Ala-179–Thr-229 the chain is Cytoplasmic. Residues Leu-230–Tyr-250 form a helical membrane-spanning segment. At Glu-251 to Thr-260 the chain is on the extracellular side. A helical membrane pass occupies residues Leu-261–Leu-281. At Gly-282–Asn-329 the chain is on the cytoplasmic side. A disordered region spans residues Lys-306–Asn-329. The span at Gly-311–Asn-329 shows a compositional bias: polar residues.

This sequence belongs to the G-protein coupled receptor 1 family.

The protein resides in the cell membrane. Functionally, receptor for bile acid. Bile acid-binding induces its internalization, activation of extracellular signal-regulated kinase and intracellular cAMP production. May be involved in the suppression of macrophage functions by bile acids. Involved in bile acid promoted GLP1R secretion. The polypeptide is G-protein coupled bile acid receptor 1 (Gpbar1) (Rattus norvegicus (Rat)).